The following is a 284-amino-acid chain: D-tagatose-1,6-bisphosphate aldolase subunit GatY (284 aa).

Asp82 serves as the catalytic Proton donor. Residues His83 and His180 each coordinate Zn(2+). Position 181 (Gly181) interacts with dihydroxyacetone phosphate. Position 208 (His208) interacts with Zn(2+). Dihydroxyacetone phosphate contacts are provided by residues 209–211 (GAS) and 230–233 (NVAT).

This sequence belongs to the class II fructose-bisphosphate aldolase family. TagBP aldolase GatY subfamily. As to quaternary structure, forms a complex with GatZ. Zn(2+) is required as a cofactor.

The catalysed reaction is D-tagatofuranose 1,6-bisphosphate = D-glyceraldehyde 3-phosphate + dihydroxyacetone phosphate. Its pathway is carbohydrate metabolism; D-tagatose 6-phosphate degradation; D-glyceraldehyde 3-phosphate and glycerone phosphate from D-tagatose 6-phosphate: step 2/2. Functionally, catalytic subunit of the tagatose-1,6-bisphosphate aldolase GatYZ, which catalyzes the reversible aldol condensation of dihydroxyacetone phosphate (DHAP or glycerone-phosphate) with glyceraldehyde 3-phosphate (G3P) to produce tagatose 1,6-bisphosphate (TBP). Requires GatZ subunit for full activity and stability. Is involved in the catabolism of galactitol. This Shigella flexneri serotype 5b (strain 8401) protein is D-tagatose-1,6-bisphosphate aldolase subunit GatY.